The following is a 380-amino-acid chain: Cytochrome b (380 aa).

Transmembrane regions (helical) follow at residues 33–53, 77–98, 113–133, and 178–198; these read FGSL…FLAM, WLIR…YLHI, WNIG…GYVL, and FFAF…LHFF. 2 residues coordinate heme b: H83 and H97. Residues H182 and H196 each coordinate heme b. H201 provides a ligand contact to a ubiquinone. Transmembrane regions (helical) follow at residues 226–246, 288–308, 320–340, and 347–367; these read YKDL…SFFS, LGGV…PILH, LTQL…WIGG, and FIAV…ILIP.

Belongs to the cytochrome b family. The cytochrome bc1 complex contains 3 respiratory subunits (MT-CYB, CYC1 and UQCRFS1), 2 core proteins (UQCRC1 and UQCRC2) and probably 6 low-molecular weight proteins. It depends on heme b as a cofactor.

It localises to the mitochondrion inner membrane. In terms of biological role, component of the ubiquinol-cytochrome c reductase complex (complex III or cytochrome b-c1 complex) that is part of the mitochondrial respiratory chain. The b-c1 complex mediates electron transfer from ubiquinol to cytochrome c. Contributes to the generation of a proton gradient across the mitochondrial membrane that is then used for ATP synthesis. This Zenopsis nebulosa (Mirror dory) protein is Cytochrome b (mt-cyb).